Reading from the N-terminus, the 517-residue chain is Putative lipase ATG15 (517 aa).

Residues M1 to H6 lie on the Cytoplasmic side of the membrane. The helical; Signal-anchor for type II membrane protein transmembrane segment at S7–L27 threads the bilayer. Residues E28–L517 are Lumenal-facing. Residues N187, N221, and N303 are each glycosylated (N-linked (GlcNAc...) asparagine). The Charge relay system role is filled by S319. The segment at G466–R499 is disordered. Residues A477–D491 show a composition bias toward acidic residues.

It belongs to the AB hydrolase superfamily. Lipase family. In terms of assembly, binds to both phosphatidylinositol (PI) and phosphatidylinositol 3,5-bisphosphate (PIP2).

Its subcellular location is the endosome. The protein localises to the multivesicular body membrane. The protein resides in the prevacuolar compartment membrane. The catalysed reaction is a triacylglycerol + H2O = a diacylglycerol + a fatty acid + H(+). In terms of biological role, lipase which is essential for lysis of subvacuolar cytoplasm to vacuole targeted bodies and intravacuolar autophagic bodies. Involved in the lysis of intravacuolar multivesicular body (MVB) vesicles. The intravacuolar membrane disintegration by ATG15 is critical to life span extension. This Mycosarcoma maydis (Corn smut fungus) protein is Putative lipase ATG15 (ATG15).